Consider the following 247-residue polypeptide: Flagellar brake protein YcgR 2 (247 aa).

One can recognise a PilZ domain in the interval 124–237 (QRREYFRVET…DETRIQRYIA (114 aa)).

This sequence belongs to the YcgR family. As to quaternary structure, monomer. Interacts with the flagellar basal bodies.

It is found in the bacterial flagellum basal body. Acts as a flagellar brake, regulating swimming and swarming in a bis-(3'-5') cyclic diguanylic acid (c-di-GMP)-dependent manner. Binds 1 c-di-GMP dimer per subunit. Increasing levels of c-di-GMP lead to decreased motility. The polypeptide is Flagellar brake protein YcgR 2 (Dechloromonas aromatica (strain RCB)).